The chain runs to 21 residues: LDTDLQGTMPEVYASERAAFL.

It is found in the secreted. It localises to the cell wall. The protein resides in the S-layer. The S-layer is a paracrystalline mono-layered assembly of proteins which coat the surface of bacteria. The polypeptide is S-layer protein 2 (Bacillus thuringiensis subsp. konkukian).